Reading from the N-terminus, the 142-residue chain is Hemoglobin subunit alpha (142 aa).

The region spanning 2–142 (VLSAADKTNV…VSTVLTSKYR (141 aa)) is the Globin domain. S4 bears the Phosphoserine mark. N6-succinyllysine is present on K8. T9 bears the Phosphothreonine mark. K12 is subject to N6-succinyllysine. K17 bears the N6-acetyllysine; alternate mark. K17 bears the N6-succinyllysine; alternate mark. Residue Y25 is modified to Phosphotyrosine. N6-succinyllysine is present on K41. S50 carries the post-translational modification Phosphoserine. H59 lines the O2 pocket. H88 provides a ligand contact to heme b. S103 is modified (phosphoserine). T109 carries the phosphothreonine modification. Residues S125 and S132 each carry the phosphoserine modification. A phosphothreonine mark is found at T135 and T138. S139 is modified (phosphoserine).

This sequence belongs to the globin family. In terms of assembly, heterotetramer of two alpha chains and two beta chains. Red blood cells.

Functionally, involved in oxygen transport from the lung to the various peripheral tissues. Hemopressin acts as an antagonist peptide of the cannabinoid receptor CNR1. Hemopressin-binding efficiently blocks cannabinoid receptor CNR1 and subsequent signaling. The polypeptide is Hemoglobin subunit alpha (HBA) (Equus caballus (Horse)).